We begin with the raw amino-acid sequence, 486 residues long: uncharacterized protein (486 aa).

Positions 1–25 (MGTMRSVYLIIIIILFFAFISLSFG) are cleaved as a signal peptide. Basic and acidic residues-rich tracts occupy residues 306-316 (KKEEKENEESS) and 326-349 (KKEE…KQEK). The segment at 306–349 (KKEEKENEESSKTINQMQRHKKEEKSQTQETKKPSKNEMNKQEK) is disordered.

This is an uncharacterized protein from Methanocaldococcus jannaschii (strain ATCC 43067 / DSM 2661 / JAL-1 / JCM 10045 / NBRC 100440) (Methanococcus jannaschii).